A 240-amino-acid chain; its full sequence is Ribosomal RNA small subunit methyltransferase G (240 aa).

Residues Gly-79, Phe-84, 130 to 131 (AE), and Arg-149 each bind S-adenosyl-L-methionine.

It belongs to the methyltransferase superfamily. RNA methyltransferase RsmG family.

The protein resides in the cytoplasm. Its function is as follows. Specifically methylates the N7 position of a guanine in 16S rRNA. This is Ribosomal RNA small subunit methyltransferase G from Desulforamulus reducens (strain ATCC BAA-1160 / DSM 100696 / MI-1) (Desulfotomaculum reducens).